A 237-amino-acid chain; its full sequence is Ribonuclease PH (237 aa).

Phosphate contacts are provided by residues Arg86 and 124–126; that span reads GTR.

This sequence belongs to the RNase PH family. In terms of assembly, homohexameric ring arranged as a trimer of dimers.

The enzyme catalyses tRNA(n+1) + phosphate = tRNA(n) + a ribonucleoside 5'-diphosphate. Its function is as follows. Phosphorolytic 3'-5' exoribonuclease that plays an important role in tRNA 3'-end maturation. Removes nucleotide residues following the 3'-CCA terminus of tRNAs; can also add nucleotides to the ends of RNA molecules by using nucleoside diphosphates as substrates, but this may not be physiologically important. Probably plays a role in initiation of 16S rRNA degradation (leading to ribosome degradation) during starvation. In Methylobacterium nodulans (strain LMG 21967 / CNCM I-2342 / ORS 2060), this protein is Ribonuclease PH.